A 317-amino-acid polypeptide reads, in one-letter code: Protease HtpX homolog (317 aa).

Helical transmembrane passes span 6 to 26 and 28 to 48; these read TAILLAGLTALFMAVGFAIGG and GGMMIAFVVASATNLFSYWNS. Position 130 (His130) interacts with Zn(2+). Glu131 is a catalytic residue. His134 contributes to the Zn(2+) binding site. The next 2 helical transmembrane spans lie at 145–165 and 173–193; these read MTATIAGAISMLANFGLLFGG and PFGAIGTILMVILAPLAAMLV. A Zn(2+)-binding site is contributed by Glu202. The disordered stretch occupies residues 283–317; that stretch reads GGGGFAPGPAPAVRPPGGNPWGVDPGGGQRRGPWG. Positions 290–300 are enriched in pro residues; sequence GPAPAVRPPGG. Positions 306-317 are enriched in gly residues; it reads DPGGGQRRGPWG.

This sequence belongs to the peptidase M48B family. Requires Zn(2+) as cofactor.

The protein localises to the cell inner membrane. This chain is Protease HtpX homolog, found in Xanthobacter autotrophicus (strain ATCC BAA-1158 / Py2).